The following is a 572-amino-acid chain: Fusion glycoprotein F0 (572 aa).

Residues 1–25 form the signal peptide; it reads MATTTMRMIISIILISTYVPHITLC. The Extracellular segment spans residues 26–522; the sequence is QNITEEFYQS…SVDVGKSTTN (497 aa). N-linked (GlcNAc...) asparagine; by host glycans are attached at residues N27 and N70. Cystine bridges form between C37-C437, C69-C212, C311-C341, C320-C331, C356-C365, C380-C391, and C414-C420. The stretch at 76-96 forms a coiled coil; sequence VKLIKQELERYNNAVAELQSL. N120 carries an N-linked (GlcNAc...) asparagine; by host glycan. The segment at 137–157 is fusion peptide; it reads FLGFLLGIGSAIASGVAVSKV. A coiled-coil region spans residues 156-207; sequence KVLHLEGEVNKIKNALLSTNKAVVSLSNGVSVLTSKVLDLKNYIDKELLPKV. Residues 479 to 514 adopt a coiled-coil conformation; it reads LVFPSDEFDASIAQVNAKINQSLAFIRRSDELLHSV. Residue N498 is glycosylated (N-linked (GlcNAc...) asparagine; by host). Residues 523-548 traverse the membrane as a helical segment; sequence VVITTIIIVIVVVILMLITVGLLFYC. C548 carries S-palmitoyl cysteine; by host lipidation. Residues 549–572 are Cytoplasmic-facing; sequence KTRSTPIMLGKDQLSSINNLSFSK.

This sequence belongs to the paramyxoviruses fusion glycoprotein family. As to quaternary structure, homotrimer. Heterodimer with fusion protein F2; disulfide-linked. Part of a complex composed of F1, F2 and G glycoproteins. As a heterodimer with F2, interacts with host RHOA; this interaction facilitates virus-induced syncytium formation. In terms of assembly, homotrimer. Heterodimer with fusion protein F1; disulfide-linked. Part of a complex composed of F1, F2 and G glycoproteins. As a heterodimer with F1, interacts with host RHOA; this interaction facilitates virus-induced syncytium formation. Post-translationally, the F glycoprotein is synthesized as a F0 inactive precursor that is heavily N-glycosylated and processed at two sites by a host furin-like protease probably in the Golgi. The cleavage site between p27 and F1 may occur after endocytosis to yield the mature F1 and F2 proteins. Both cleavages are required for membrane fusion and p27 is released from the processed protein.

Its subcellular location is the host Golgi apparatus membrane. The protein localises to the virion membrane. The protein resides in the host cell membrane. Inactive precursor that is cleaved at two sites by a furin-like protease to give rise to the mature F1 and F2 fusion glycoproteins. In terms of biological role, class I viral fusion protein. Under the current model, the protein has at least 3 conformational states: pre-fusion native state, pre-hairpin intermediate state, and post-fusion hairpin state. During viral and plasma cell membrane fusion, the coiled coil regions assume a trimer-of-hairpins structure, positioning the fusion peptide in close proximity to the C-terminal region of the ectodomain. The formation of this structure appears to drive apposition and subsequent fusion of viral and cellular membranes leading to delivery of the nucleocapsid into the cytoplasm. This fusion is pH independent and occurs at the plasma or endosomal membrane. The trimer of F1-F2 (F protein) also facilitates the attachment and entry into the host cell. Later in infection, F protein expressed at the plasma membrane of infected cells can mediate fusion with adjacent cells to form syncytia, a cytopathic effect that could lead to tissue necrosis. Its function is as follows. Major determinant of the species specificity of RSV infection. The trimer of F1-F2 (F protein) also facilitates the attachment and entry into the host cell. Later in infection, F protein expressed at the plasma membrane of infected cells can mediate fusion with adjacent cells to form syncytia, a cytopathic effect that could lead to tissue necrosis. This is Fusion glycoprotein F0 (F) from Bovine respiratory syncytial virus (strain A51908) (BRS).